The following is a 268-amino-acid chain: Interleukin-1 alpha (268 aa).

Residues Met-1–Arg-112 constitute a propeptide that is removed on maturation. Lys-82 is modified (N6-acetyllysine). Residues Lys-82 to Leu-86 are nuclear localization signal (NLS). Residue Ser-87 is modified to Phosphoserine. N-linked (GlcNAc...) asparagine glycosylation is found at Asn-102 and Asn-141.

Belongs to the IL-1 family. In terms of assembly, monomer. Interacts with TMED10; the interaction mediates the translocation from the cytoplasm into the ERGIC (endoplasmic reticulum-Golgi intermediate compartment) and thereby secretion. Interacts with IL1R1. Interacts with S100A13; this interaction is the first step in the export of IL1A, followed by direct translocation of this complex across the plasma membrane. In terms of processing, acetylated within its nuclear localization sequence, which impacts subcellular localization. Post-translationally, proteolytic processed by CAPN1 in a calcium-dependent manner. Cleavage from 31 kDa precursor to 18 kDa biologically active molecules. Phosphorylated. Phosphorylation greatly enhances susceptibility to digestion and promotes the conversion of pre-IL1A alpha to the biologically active IL1A.

The protein localises to the nucleus. Its subcellular location is the cytoplasm. The protein resides in the secreted. Functionally, cytokine constitutively present intracellularly in nearly all resting non-hematopoietic cells that plays an important role in inflammation and bridges the innate and adaptive immune systems. After binding to its receptor IL1R1 together with its accessory protein IL1RAP, forms the high affinity interleukin-1 receptor complex. Signaling involves the recruitment of adapter molecules such as MYD88, IRAK1 or IRAK4. In turn, mediates the activation of NF-kappa-B and the three MAPK pathways p38, p42/p44 and JNK pathways. Within the cell, acts as an alarmin and cell death results in its liberation in the extracellular space after disruption of the cell membrane to induce inflammation and alert the host to injury or damage. In addition to its role as a danger signal, which occurs when the cytokine is passively released by cell necrosis, directly senses DNA damage and acts as signal for genotoxic stress without loss of cell integrity. The polypeptide is Interleukin-1 alpha (IL1A) (Capra hircus (Goat)).